A 391-amino-acid chain; its full sequence is Na(+)/H(+) antiporter NhaA (391 aa).

The next 12 membrane-spanning stretches (helical) occupy residues F9 to I29, Y36 to A56, L59 to V79, I95 to I115, V123 to L143, L154 to F174, G177 to M197, L213 to L235, W259 to G279, I293 to V313, I329 to L349, and M364 to A384.

The protein belongs to the NhaA Na(+)/H(+) (TC 2.A.33) antiporter family.

It localises to the cell inner membrane. The catalysed reaction is Na(+)(in) + 2 H(+)(out) = Na(+)(out) + 2 H(+)(in). Functionally, na(+)/H(+) antiporter that extrudes sodium in exchange for external protons. The chain is Na(+)/H(+) antiporter NhaA from Pseudomonas putida (strain GB-1).